Here is a 345-residue protein sequence, read N- to C-terminus: BAG family molecular chaperone regulator 1 (345 aa).

The interval 1–137 (MAQRGGARRP…STRSEEVTRE (137 aa)) is disordered. Residues 68–80 (RRPRMKKKTRRRS) show a composition bias toward basic residues. Positions 81-91 (TRSEELTRSEE) are enriched in basic and acidic residues. Residues 95-114 (SEEATWSEEATQSEEATQGE) are compositionally biased toward low complexity. 7 repeat units span residues 96–101 (EEATWS), 102–107 (EEATQS), 108–113 (EEATQG), 114–119 (EEMNRS), 120–125 (QEVTRD), 126–131 (EESTRS), and 132–137 (EEVTRE). Residues 96 to 137 (EEATWSEEATQSEEATQGEEMNRSQEVTRDEESTRSEEVTRE) are 7 X 6 AA tandem repeat of E-E-X(4). Basic and acidic residues predominate over residues 115–137 (EMNRSQEVTRDEESTRSEEVTRE). One can recognise a Ubiquitin-like domain in the interval 144–224 (LTVTVTHSNE…VMLIGKKNSP (81 aa)). The interaction with HSPA8 stretch occupies residues 172-219 (DLAQVVEEVIGVPQSFQKLIFKGKSLKEMETPLSALGIQDGCRVMLIG). The interval 216–345 (MLIGKKNSPQ…LQSTNFALAE (130 aa)) is interaction with PPP1R15A. Position 223 is a phosphoserine (Ser223). Residues 246–326 (QLEELNKELT…AFLAECDTVE (81 aa)) enclose the BAG domain.

Homodimer. Forms a heteromeric complex with HSP70/HSC70. Binds to the ATPase domain of HSP/HSC70 chaperones. Isoform 1, isoform 3 and isoform 4 but not isoform 2 interact with HSPA8/HSC70. Interacts with NR3C1. Interacts with the N-terminal region of MAPRE2. Interacts with PPP1R15A. Interacts with BCL2 in an ATP-dependent manner. Isoform 2 does not interact with BCL2. Interacts with SIAH1. Interacts with HSPA8 (via NBD). Interacts with HSPA1A (via NBD) and HSPA1B (via NBD). Interacts with SIAH2. Interacts with ESR1; the interaction is promoted in the absence of estradiol (17-beta-estradiol/E2). In terms of processing, ubiquitinated; mediated by SIAH1 or SIAH2 and leading to its subsequent proteasomal degradation. In terms of tissue distribution, isoform 4 is the most abundantly expressed isoform. It is ubiquitously expressed throughout most tissues, except the liver, colon, breast and uterine myometrium. Isoform 1 is expressed in the ovary and testis. Isoform 4 is expressed in several types of tumor cell lines, and at consistently high levels in leukemia and lymphoma cell lines. Isoform 1 is expressed in the prostate, breast and leukemia cell lines. Isoform 3 is the least abundant isoform in tumor cell lines (at protein level).

It localises to the nucleus. The protein localises to the cytoplasm. Its function is as follows. Co-chaperone for HSP70 and HSC70 chaperone proteins. Acts as a nucleotide-exchange factor (NEF) promoting the release of ADP from the HSP70 and HSC70 proteins thereby triggering client/substrate protein release. Nucleotide release is mediated via its binding to the nucleotide-binding domain (NBD) of HSPA8/HSC70 where as the substrate release is mediated via its binding to the substrate-binding domain (SBD) of HSPA8/HSC70. Inhibits the pro-apoptotic function of PPP1R15A, and has anti-apoptotic activity. Markedly increases the anti-cell death function of BCL2 induced by various stimuli. Involved in the STUB1-mediated proteasomal degradation of ESR1 in response to age-related circulating estradiol (17-beta-estradiol/E2) decline, thereby promotes neuronal apoptosis in response to ischemic reperfusion injury. This is BAG family molecular chaperone regulator 1 (BAG1) from Homo sapiens (Human).